The chain runs to 216 residues: Cytidylate kinase (216 aa).

ATP is bound at residue 11-19 (GPAGAGKGT).

This sequence belongs to the cytidylate kinase family. Type 1 subfamily.

Its subcellular location is the cytoplasm. It carries out the reaction CMP + ATP = CDP + ADP. The enzyme catalyses dCMP + ATP = dCDP + ADP. The polypeptide is Cytidylate kinase (Mesorhizobium japonicum (strain LMG 29417 / CECT 9101 / MAFF 303099) (Mesorhizobium loti (strain MAFF 303099))).